We begin with the raw amino-acid sequence, 213 residues long: Thymidylate kinase (213 aa).

Position 10–17 (10–17) interacts with ATP; that stretch reads GLEGAGKT.

Belongs to the thymidylate kinase family.

It catalyses the reaction dTMP + ATP = dTDP + ADP. Phosphorylation of dTMP to form dTDP in both de novo and salvage pathways of dTTP synthesis. This is Thymidylate kinase from Salmonella arizonae (strain ATCC BAA-731 / CDC346-86 / RSK2980).